Consider the following 456-residue polypeptide: Aminotransferase ALD1, chloroplastic (456 aa).

Residues Met1–Asn43 constitute a chloroplast transit peptide. Pyridoxal 5'-phosphate-binding positions include Tyr108, Ala142–Gln143, Asn223, Asp251, Tyr254, Ser281, Ser283, Arg292, and Asn323.

It belongs to the class-I pyridoxal-phosphate-dependent aminotransferase family. LL-diaminopimelate aminotransferase subfamily. Pyridoxal 5'-phosphate is required as a cofactor. In terms of tissue distribution, highly expressed in senescing leaves, flowers, siliques and seeds.

The protein localises to the plastid. Its subcellular location is the chloroplast. Functionally, aminotransferase involved in local and systemic acquired resistance (SAR) to the bacterial pathogen P.syringae. Required for salicylic acid (SA) and camalexin accumulation upon pathogen infection. Possesses aminotransferase activity in vitro and may generate amino-acid-derived defense signals in vivo. May be involved in ethylene-induced senescence signaling. Involved in the biosynthesis of pipecolate (Pip), a metabolite that orchestrates defense amplification, positive regulation of SA biosynthesis, and priming to guarantee effective local resistance induction and the establishment of SAR. Converts lysine to alpha-keto-epsilon-aminocaproate, which then can spontaneously cyclize to form delta-(1)-piperideine-2-carboxylate (P2C). P2C is converted to Pip by SARD4. May produce non-Pip metabolites that play roles in immunity. Involved in the synthesis of distinct metabolite signals that affect basal and early defenses, and later defense responses. In Arabidopsis thaliana (Mouse-ear cress), this protein is Aminotransferase ALD1, chloroplastic.